Here is a 99-residue protein sequence, read N- to C-terminus: NADH-quinone oxidoreductase subunit K (99 aa).

The next 3 helical transmembrane spans lie at 3-23, 28-48, and 59-79; these read PENY…GVLI, IIVF…FVTF, and VFAF…LAII.

This sequence belongs to the complex I subunit 4L family. NDH-1 is composed of 14 different subunits. Subunits NuoA, H, J, K, L, M, N constitute the membrane sector of the complex.

The protein localises to the cell membrane. It carries out the reaction a quinone + NADH + 5 H(+)(in) = a quinol + NAD(+) + 4 H(+)(out). Functionally, NDH-1 shuttles electrons from NADH, via FMN and iron-sulfur (Fe-S) centers, to quinones in the respiratory chain. The immediate electron acceptor for the enzyme in this species is believed to be a menaquinone. Couples the redox reaction to proton translocation (for every two electrons transferred, four hydrogen ions are translocated across the cytoplasmic membrane), and thus conserves the redox energy in a proton gradient. The polypeptide is NADH-quinone oxidoreductase subunit K (Rhodococcus jostii (strain RHA1)).